A 462-amino-acid polypeptide reads, in one-letter code: Na(+)/H(+) antiporter NhaA (462 aa).

11 helical membrane-spanning segments follow: residues I24–L44, L66–L86, A102–L122, G156–A176, L196–I216, P235–I255, H256–G275, P290–E310, M312–G332, M361–L381, and A392–S412.

Belongs to the NhaA Na(+)/H(+) (TC 2.A.33) antiporter family.

It localises to the cell membrane. The catalysed reaction is Na(+)(in) + 2 H(+)(out) = Na(+)(out) + 2 H(+)(in). Na(+)/H(+) antiporter that extrudes sodium in exchange for external protons. This chain is Na(+)/H(+) antiporter NhaA, found in Bifidobacterium breve (strain NCIMB 8807 / UCC2003).